A 375-amino-acid polypeptide reads, in one-letter code: Queuine tRNA-ribosyltransferase (375 aa).

The Proton acceptor role is filled by Asp94. Substrate-binding positions include 94–98 (DSGGF), Asp148, Gln191, and Gly218. The RNA binding stretch occupies residues 249 to 255 (GVGSPDD). The Nucleophile role is filled by Asp268. The RNA binding; important for wobble base 34 recognition stretch occupies residues 273 to 277 (TRIAR). The Zn(2+) site is built by Cys306, Cys308, Cys311, and His337.

Belongs to the queuine tRNA-ribosyltransferase family. In terms of assembly, homodimer. Within each dimer, one monomer is responsible for RNA recognition and catalysis, while the other monomer binds to the replacement base PreQ1. It depends on Zn(2+) as a cofactor.

It carries out the reaction 7-aminomethyl-7-carbaguanine + guanosine(34) in tRNA = 7-aminomethyl-7-carbaguanosine(34) in tRNA + guanine. Its pathway is tRNA modification; tRNA-queuosine biosynthesis. Catalyzes the base-exchange of a guanine (G) residue with the queuine precursor 7-aminomethyl-7-deazaguanine (PreQ1) at position 34 (anticodon wobble position) in tRNAs with GU(N) anticodons (tRNA-Asp, -Asn, -His and -Tyr). Catalysis occurs through a double-displacement mechanism. The nucleophile active site attacks the C1' of nucleotide 34 to detach the guanine base from the RNA, forming a covalent enzyme-RNA intermediate. The proton acceptor active site deprotonates the incoming PreQ1, allowing a nucleophilic attack on the C1' of the ribose to form the product. After dissociation, two additional enzymatic reactions on the tRNA convert PreQ1 to queuine (Q), resulting in the hypermodified nucleoside queuosine (7-(((4,5-cis-dihydroxy-2-cyclopenten-1-yl)amino)methyl)-7-deazaguanosine). In Thermoanaerobacter pseudethanolicus (strain ATCC 33223 / 39E) (Clostridium thermohydrosulfuricum), this protein is Queuine tRNA-ribosyltransferase.